Consider the following 441-residue polypeptide: 3-phosphoshikimate 1-carboxyvinyltransferase (441 aa).

A disordered region spans residues 1 to 24 (MSGTGQSDDPRELKAGGSLQGRVK). 3-phosphoshikimate-binding residues include lysine 29, serine 30, and arginine 34. Lysine 29 contacts phosphoenolpyruvate. Phosphoenolpyruvate contacts are provided by glycine 103 and arginine 132. Residues serine 177, glutamine 179, aspartate 328, and lysine 355 each contribute to the 3-phosphoshikimate site. Glutamine 179 lines the phosphoenolpyruvate pocket. Aspartate 328 serves as the catalytic Proton acceptor. Residues arginine 359 and arginine 401 each contribute to the phosphoenolpyruvate site.

This sequence belongs to the EPSP synthase family. Monomer.

It is found in the cytoplasm. The catalysed reaction is 3-phosphoshikimate + phosphoenolpyruvate = 5-O-(1-carboxyvinyl)-3-phosphoshikimate + phosphate. It functions in the pathway metabolic intermediate biosynthesis; chorismate biosynthesis; chorismate from D-erythrose 4-phosphate and phosphoenolpyruvate: step 6/7. Its function is as follows. Catalyzes the transfer of the enolpyruvyl moiety of phosphoenolpyruvate (PEP) to the 5-hydroxyl of shikimate-3-phosphate (S3P) to produce enolpyruvyl shikimate-3-phosphate and inorganic phosphate. The chain is 3-phosphoshikimate 1-carboxyvinyltransferase from Synechococcus sp. (strain CC9605).